Consider the following 2176-residue polypeptide: Protein sidekick-2 (2176 aa).

The N-terminal stretch at 1-24 (MFSSMWRLPLWTLLALHRIHSAGA) is a signal peptide. The Extracellular portion of the chain corresponds to 25-1936 (QDDVPPYFKT…ASPFYEEWWF (1912 aa)). 6 consecutive Ig-like C2-type domains span residues 30 to 112 (PYFK…TEVQ), 117 to 204 (GSFE…QPIT), 219 to 298 (PTII…SSVA), 312 to 402 (PQFV…LAVT), 406 to 495 (PNIT…ADLV), and 500 to 589 (TRIT…AHLR). C52 and C95 are joined by a disulfide. A glycan (N-linked (GlcNAc...) asparagine) is linked at N197. 4 disulfides stabilise this stretch: C241-C288, C334-C384, C427-C479, and C521-C573. Fibronectin type-III domains are found at residues 596–692 (APEH…LPEE), 697–793 (PPQN…TLQG), 798–897 (PPGN…THED), 901–995 (PVGH…VPPE), 999–1098 (APTN…TLQA), 1103–1201 (APAN…TRES), 1206–1303 (GPTN…TLDD), 1307–1401 (PPMG…TEKR), 1406–1503 (PPSK…TLQA), 1508–1625 (APTI…VGEA), 1630–1726 (APQN…TQQA), 1730–1825 (APGS…TGPG), and 1828–1930 (APGP…ASPF). The N-linked (GlcNAc...) asparagine glycan is linked to N747. N-linked (GlcNAc...) asparagine glycans are attached at residues N940 and N952. Residue N1106 is glycosylated (N-linked (GlcNAc...) asparagine). Residue N1592 is glycosylated (N-linked (GlcNAc...) asparagine). Positions 1712–1734 (DGPRSTPTRGQTQQAAPSAPGSV) are disordered. Residues 1716-1727 (STPTRGQTQQAA) show a composition bias toward polar residues. The helical transmembrane segment at 1937-1957 (LVVIALVGLIFILLLVFVLII) threads the bilayer. The Cytoplasmic portion of the chain corresponds to 1958–2176 (RGQSKKYSKK…APIAGFSSFV (219 aa)). 3 disordered regions span residues 2013–2032 (GLYTRSPPRPSPGSLHYSDE), 2043–2070 (AESSSLTEKPSEISDSQGSDSEYEVDTN), and 2102–2176 (QAYS…SSFV). Composition is skewed to polar residues over residues 2044–2070 (ESSSLTEKPSEISDSQGSDSEYEVDTN) and 2119–2129 (VPNSNSTQQGS). A PDZ-binding motif is present at residues 2170 to 2176 (AGFSSFV).

The protein belongs to the sidekick family. As to quaternary structure, homodimer; mediates homophilic interactions to promote cell adhesion. Interacts (via PDZ-binding motif) with MAGI1, MAGI2, DLG2, DLG3 and DLG4. In terms of tissue distribution, expressed in retinal ganglion cells (RGCs) that form synapses in distinct inner plexiform layer (IPL) sublaminae. Specifically expressed in specific subsets of retinal ganglion cells (RGCs), named W3B-RGCs, that specifically respond when the timing of the movement of a small object differs from that of the background, but not when they coincide (at protein level). Also present in excitatory amacrine cell type called VG3-ACs, that provide strong and selective input W3B-RGCs (at protein level). Expressed at low levels in the glomeruli.

The protein resides in the cell membrane. It localises to the synapse. Functionally, adhesion molecule that promotes lamina-specific synaptic connections in the retina and is specifically required for the formation of neuronal circuits that detect motion. Acts by promoting formation of synapses between two specific retinal cell types: the retinal ganglion cells W3B-RGCs and the excitatory amacrine cells VG3-ACs. Formation of synapses between these two cells plays a key role in detection of motion. Promotes synaptic connectivity via homophilic interactions. This chain is Protein sidekick-2, found in Mus musculus (Mouse).